The sequence spans 74 residues: U3-agatoxin-Ao1d (74 aa).

The first 20 residues, 1-20 (MKAAISLLLLSALLFVVIEA), serve as a signal peptide directing secretion. The propeptide occupies 21–34 (ITYEEGKELFQGER). 4 disulfide bridges follow: Cys37-Cys53, Cys44-Cys58, Cys52-Cys68, and Cys60-Cys66. Ser72 is modified (serine amide).

It belongs to the neurotoxin 07 (Beta/delta-agtx) family. 02 (aga-3) subfamily. In terms of tissue distribution, expressed by the venom gland.

The protein localises to the secreted. Its function is as follows. Insecticidal neurotoxin that induces an irreversible spastic paralysis when injected into insects. Modifies presynaptic voltage-gated sodium channels (Nav), causing them to open at the normal resting potential of the nerve. This leads to spontaneous release of neurotransmitter and repetitive action potentials in motor neurons. The protein is U3-agatoxin-Ao1d of Agelena orientalis (Funnel-web spider).